Reading from the N-terminus, the 344-residue chain is Cyanuric acid amidohydrolase (344 aa).

Residues 1–91 are RU A; that stretch reads MTVVDIVKRT…ASAFVGTDRP (91 aa). Residues Arg-51 and 71-72 contribute to the substrate site; that span reads SG. Positions 97–232 are RU B; sequence ALVAAVGRTA…CHILVLGNSP (136 aa). Lys-146 is an active-site residue. Substrate-binding positions include Arg-178 and 215–216; that span reads SS. Ser-215 acts as the Nucleophile in catalysis. The interval 238–344 is RU C; it reads LRAVHGVMRD…PVTVVYRVAS (107 aa). Glu-276 lines the Mg(2+) pocket. Substrate is bound by residues Arg-303 and 322–323; that span reads SG. Residues Ala-325, Gln-328, Gly-329, Pro-330, and Gly-333 each coordinate Mg(2+).

This sequence belongs to the cyclic amide hydrolase (CyAH) family. As to quaternary structure, homotetramer.

It carries out the reaction cyanurate + H2O = 1-carboxybiuret + H(+). It participates in xenobiotic degradation; atrazine degradation; biuret from cyanurate: step 1/1. Its activity is regulated as follows. Inhibited by barbituric acid. Functionally, responsible for the hydrolysis of cyanuric acid, an intermediate formed during catabolism of s-triazine based compounds in herbicides such as atrazine and polymers such as melamine. Catalyzes the hydrolytic opening of the s-triazine ring of cyanuric acid (2,4,6-trihydroxy-s-triazine) to yield carbon dioxide and carboxybiuret, which spontaneously decarboxylates to biuret. This Pseudonocardia dioxanivorans (strain ATCC 55486 / DSM 44775 / JCM 13855 / CB1190) protein is Cyanuric acid amidohydrolase.